The following is a 287-amino-acid chain: Vesicle-associated protein 4-3 (287 aa).

A compositionally biased stretch (basic and acidic residues) spans 1–14 (MALTEDKSDSDGRR). Positions 1–45 (MALTEDKSDSDGRRWGKFKLPFRNSNSQAPSASSSSSMATSSSSV) are disordered. Positions 25–45 (SNSQAPSASSSSSMATSSSSV) are enriched in low complexity. The MSP domain occupies 99–221 (RLKLDPSAKL…EEQVMRVVFL (123 aa)).

The protein belongs to the VAMP-associated protein (VAP) (TC 9.B.17) family.

May play a role in vesicle trafficking. The chain is Vesicle-associated protein 4-3 (PVA43) from Arabidopsis thaliana (Mouse-ear cress).